We begin with the raw amino-acid sequence, 476 residues long: Angiotensinogen (476 aa).

An N-terminal signal peptide occupies residues 1-24; it reads MAPAGLSLGATILCLLAWAGLAAG. Cys-42 and Cys-161 are disulfide-bonded. A disordered region spans residues 45–64; that stretch reads LEKPSVETPADPTLTPVPIQ. N-linked (GlcNAc...) asparagine glycosylation occurs at Asn-295.

Belongs to the serpin family. Post-translationally, in response to low blood pressure, the enzyme renin/REN cleaves angiotensinogen to produce angiotensin-1. Angiotensin-1 is a substrate of ACE (angiotensin converting enzyme) that removes a dipeptide to yield the physiologically active peptide angiotensin-2. Angiotensin-1 and angiotensin-2 can be further processed to generate angiotensin-3, angiotensin-4. Angiotensin 1-9 is cleaved from angiotensin-1 by ACE2 and can be further processed by ACE to produce angiotensin 1-7, angiotensin 1-5 and angiotensin 1-4. Angiotensin 1-7 has also been proposed to be cleaved from angiotensin-2 by ACE2 or from angiotensin-1 by MME (neprilysin). In terms of processing, the disulfide bond is labile. Angiotensinogen is present in the circulation in a near 40:60 ratio with the oxidized disulfide-bonded form, which preferentially interacts with receptor-bound renin.

Its subcellular location is the secreted. Its function is as follows. Essential component of the renin-angiotensin system (RAS), a potent regulator of blood pressure, body fluid and electrolyte homeostasis. Acts directly on vascular smooth muscle as a potent vasoconstrictor, affects cardiac contractility and heart rate through its action on the sympathetic nervous system, and alters renal sodium and water absorption through its ability to stimulate the zona glomerulosa cells of the adrenal cortex to synthesize and secrete aldosterone. Acts by binding to angiotensin receptors AGTR1 and AGTR2. Also binds the DEAR/FBXW7-AS1 receptor. Functionally, stimulates aldosterone release. In terms of biological role, is a ligand for the G-protein coupled receptor MAS1. Has vasodilator and antidiuretic effects. Has an antithrombotic effect that involves MAS1-mediated release of nitric oxide from platelets. This chain is Angiotensinogen (AGT), found in Ovis aries (Sheep).